The primary structure comprises 763 residues: Ethylene receptor 2 (763 aa).

Transmembrane regions (helical) follow at residues 58–78 (FLIA…ATCS), 86–106 (IVLQ…ITMF), and 115–135 (VVLA…ATAI). Cu cation-binding residues include C97 and H101. The GAF domain occupies 190–339 (DRHTILYTTM…VVADQVAVAL (150 aa)). One can recognise a Histidine kinase domain in the interval 382 to 615 (AMYDGMRRPM…TIMLALQFQL (234 aa)). One can recognise a Response regulatory domain in the interval 641–760 (QVILVDSDDT…ALGDELYRVL (120 aa)). D692 carries the post-translational modification 4-aspartylphosphate.

Belongs to the ethylene receptor family. Cu cation is required as a cofactor. In terms of processing, autophosphorylated on serine, threonine and tyrosine residues.

The protein resides in the endoplasmic reticulum membrane. It carries out the reaction ATP + protein L-histidine = ADP + protein N-phospho-L-histidine.. In terms of biological role, ethylene receptor related to bacterial two-component regulators. Acts as a negative regulator of ethylene signaling. May delay the transition from the vegetative stage to the floral stage by up-regulating GI (GIGANTEA) and RCN1 and cause starch accumulation in stems by down-regulating the alpha-amylase AMY3D. In Oryza sativa subsp. japonica (Rice), this protein is Ethylene receptor 2.